Here is a 1407-residue protein sequence, read N- to C-terminus: DNA-directed RNA polymerase subunit beta' (1407 aa).

Zn(2+) contacts are provided by Cys-70, Cys-72, Cys-85, and Cys-88. The Mg(2+) site is built by Asp-460, Asp-462, and Asp-464. Residues Cys-814, Cys-888, Cys-895, and Cys-898 each coordinate Zn(2+). The residue at position 972 (Lys-972) is an N6-acetyllysine.

The protein belongs to the RNA polymerase beta' chain family. The RNAP catalytic core consists of 2 alpha, 1 beta, 1 beta' and 1 omega subunit. When a sigma factor is associated with the core the holoenzyme is formed, which can initiate transcription. Mg(2+) is required as a cofactor. It depends on Zn(2+) as a cofactor.

The enzyme catalyses RNA(n) + a ribonucleoside 5'-triphosphate = RNA(n+1) + diphosphate. DNA-dependent RNA polymerase catalyzes the transcription of DNA into RNA using the four ribonucleoside triphosphates as substrates. The protein is DNA-directed RNA polymerase subunit beta' of Shigella flexneri serotype 5b (strain 8401).